The sequence spans 31 residues: Cytochrome b6-f complex subunit 6 (31 aa).

A helical membrane pass occupies residues 3–23; sequence VAIDYFLLVGFCFAVTSGLWI.

It belongs to the PetL family. As to quaternary structure, the 4 large subunits of the cytochrome b6-f complex are cytochrome b6, subunit IV (17 kDa polypeptide, PetD), cytochrome f and the Rieske protein, while the 4 small subunits are PetG, PetL, PetM and PetN. The complex functions as a dimer.

The protein resides in the plastid. It is found in the chloroplast thylakoid membrane. Component of the cytochrome b6-f complex, which mediates electron transfer between photosystem II (PSII) and photosystem I (PSI), cyclic electron flow around PSI, and state transitions. PetL is important for photoautotrophic growth as well as for electron transfer efficiency and stability of the cytochrome b6-f complex. The polypeptide is Cytochrome b6-f complex subunit 6 (Phaeodactylum tricornutum (strain CCAP 1055/1)).